The following is a 222-amino-acid chain: Cytochrome b6 (222 aa).

Residues Ile39–Phe59 traverse the membrane as a helical segment. Cys42 provides a ligand contact to heme c. Heme b-binding residues include His93 and His107. 3 helical membrane passes run Ala97–Phe117, Leu123–Tyr143, and Leu193–Ile213. Residues His194 and His209 each contribute to the heme b site.

It belongs to the cytochrome b family. PetB subfamily. The 4 large subunits of the cytochrome b6-f complex are cytochrome b6, subunit IV (17 kDa polypeptide, PetD), cytochrome f and the Rieske protein, while the 4 small subunits are PetG, PetL, PetM and PetN. The complex functions as a dimer. Heme b is required as a cofactor. Heme c serves as cofactor.

Its subcellular location is the cellular thylakoid membrane. In terms of biological role, component of the cytochrome b6-f complex, which mediates electron transfer between photosystem II (PSII) and photosystem I (PSI), cyclic electron flow around PSI, and state transitions. The sequence is that of Cytochrome b6 from Trichodesmium erythraeum (strain IMS101).